The following is a 351-amino-acid chain: UDP-3-O-acylglucosamine N-acyltransferase (351 aa).

The active-site Proton acceptor is His240.

Belongs to the transferase hexapeptide repeat family. LpxD subfamily. As to quaternary structure, homotrimer.

It carries out the reaction a UDP-3-O-[(3R)-3-hydroxyacyl]-alpha-D-glucosamine + a (3R)-hydroxyacyl-[ACP] = a UDP-2-N,3-O-bis[(3R)-3-hydroxyacyl]-alpha-D-glucosamine + holo-[ACP] + H(+). Its pathway is bacterial outer membrane biogenesis; LPS lipid A biosynthesis. In terms of biological role, catalyzes the N-acylation of UDP-3-O-acylglucosamine using 3-hydroxyacyl-ACP as the acyl donor. Is involved in the biosynthesis of lipid A, a phosphorylated glycolipid that anchors the lipopolysaccharide to the outer membrane of the cell. The protein is UDP-3-O-acylglucosamine N-acyltransferase of Pseudomonas entomophila (strain L48).